The sequence spans 89 residues: Small ribosomal subunit protein uS15 (89 aa).

Belongs to the universal ribosomal protein uS15 family. Part of the 30S ribosomal subunit. Forms a bridge to the 50S subunit in the 70S ribosome, contacting the 23S rRNA.

Its function is as follows. One of the primary rRNA binding proteins, it binds directly to 16S rRNA where it helps nucleate assembly of the platform of the 30S subunit by binding and bridging several RNA helices of the 16S rRNA. Functionally, forms an intersubunit bridge (bridge B4) with the 23S rRNA of the 50S subunit in the ribosome. The protein is Small ribosomal subunit protein uS15 of Pasteurella multocida (strain Pm70).